We begin with the raw amino-acid sequence, 479 residues long: Cardiolipin synthase A (479 aa).

The next 2 helical transmembrane spans lie at 8–28 (FFGYLLGMIHLLGIVAALHAL) and 38–58 (IAWAMPLLFIPYLTLIPYLIF). 2 consecutive PLD phosphodiesterase domains span residues 218-245 (VNFRNHRKIVVVDGLLGFIGGHNVGDEY) and 392-419 (QPGFLHQKVVLVDDDVSAIGSANLDNRS). Active-site residues include His223, Lys225, Asp230, His397, Lys399, and Asp404.

Belongs to the phospholipase D family. Cardiolipin synthase subfamily. ClsA sub-subfamily.

It localises to the cell inner membrane. It carries out the reaction 2 a 1,2-diacyl-sn-glycero-3-phospho-(1'-sn-glycerol) = a cardiolipin + glycerol. Functionally, catalyzes the reversible phosphatidyl group transfer from one phosphatidylglycerol molecule to another to form cardiolipin (CL) (diphosphatidylglycerol) and glycerol. This Pseudomonas putida (strain ATCC 700007 / DSM 6899 / JCM 31910 / BCRC 17059 / LMG 24140 / F1) protein is Cardiolipin synthase A.